The sequence spans 330 residues: Beta-ketoacyl-[acyl-carrier-protein] synthase III (330 aa).

Active-site residues include cysteine 115 and histidine 255. Positions 256–260 (QANFR) are ACP-binding. Asparagine 285 is a catalytic residue.

This sequence belongs to the thiolase-like superfamily. FabH family. Homodimer.

The protein localises to the cytoplasm. The catalysed reaction is malonyl-[ACP] + acetyl-CoA + H(+) = 3-oxobutanoyl-[ACP] + CO2 + CoA. It participates in lipid metabolism; fatty acid biosynthesis. Functionally, catalyzes the condensation reaction of fatty acid synthesis by the addition to an acyl acceptor of two carbons from malonyl-ACP. Catalyzes the first condensation reaction which initiates fatty acid synthesis and may therefore play a role in governing the total rate of fatty acid production. Possesses both acetoacetyl-ACP synthase and acetyl transacylase activities. Its substrate specificity determines the biosynthesis of branched-chain and/or straight-chain of fatty acids. The polypeptide is Beta-ketoacyl-[acyl-carrier-protein] synthase III (Helicobacter pylori (strain P12)).